We begin with the raw amino-acid sequence, 172 residues long: Large ribosomal subunit protein uL10 (172 aa).

This sequence belongs to the universal ribosomal protein uL10 family. In terms of assembly, part of the ribosomal stalk of the 50S ribosomal subunit. The N-terminus interacts with L11 and the large rRNA to form the base of the stalk. The C-terminus forms an elongated spine to which L12 dimers bind in a sequential fashion forming a multimeric L10(L12)X complex.

Its function is as follows. Forms part of the ribosomal stalk, playing a central role in the interaction of the ribosome with GTP-bound translation factors. This is Large ribosomal subunit protein uL10 from Methylorubrum extorquens (strain CM4 / NCIMB 13688) (Methylobacterium extorquens).